The primary structure comprises 244 residues: Uridylate kinase (244 aa).

18–21 (KVSG) provides a ligand contact to ATP. A UMP-binding site is contributed by G60. Residues G61 and R65 each contribute to the ATP site. UMP-binding positions include D80 and 141–148 (TGNPFCTT). Positions 168, 169, 174, and 177 each coordinate ATP.

This sequence belongs to the UMP kinase family. In terms of assembly, homohexamer.

The protein localises to the cytoplasm. It carries out the reaction UMP + ATP = UDP + ADP. It functions in the pathway pyrimidine metabolism; CTP biosynthesis via de novo pathway; UDP from UMP (UMPK route): step 1/1. With respect to regulation, inhibited by UTP. Functionally, catalyzes the reversible phosphorylation of UMP to UDP. This is Uridylate kinase from Rickettsia typhi (strain ATCC VR-144 / Wilmington).